Here is a 64-residue protein sequence, read N- to C-terminus: Large ribosomal subunit protein bL28 (64 aa).

Belongs to the bacterial ribosomal protein bL28 family.

In Bifidobacterium adolescentis (strain ATCC 15703 / DSM 20083 / NCTC 11814 / E194a), this protein is Large ribosomal subunit protein bL28.